The following is a 180-amino-acid chain: NAD(P)H-quinone oxidoreductase subunit I, chloroplastic (180 aa).

4Fe-4S ferredoxin-type domains follow at residues 55–84 (GRIHFEFDKCIACEVCVRVCPIDLPVVDWR) and 95–124 (LNYSIDFGVCIFCGNCVEYCPTSCLSMTEE). 8 residues coordinate [4Fe-4S] cluster: C64, C67, C70, C74, C104, C107, C110, and C114.

Belongs to the complex I 23 kDa subunit family. NDH is composed of at least 16 different subunits, 5 of which are encoded in the nucleus. Requires [4Fe-4S] cluster as cofactor.

Its subcellular location is the plastid. It localises to the chloroplast thylakoid membrane. It catalyses the reaction a plastoquinone + NADH + (n+1) H(+)(in) = a plastoquinol + NAD(+) + n H(+)(out). It carries out the reaction a plastoquinone + NADPH + (n+1) H(+)(in) = a plastoquinol + NADP(+) + n H(+)(out). Functionally, NDH shuttles electrons from NAD(P)H:plastoquinone, via FMN and iron-sulfur (Fe-S) centers, to quinones in the photosynthetic chain and possibly in a chloroplast respiratory chain. The immediate electron acceptor for the enzyme in this species is believed to be plastoquinone. Couples the redox reaction to proton translocation, and thus conserves the redox energy in a proton gradient. This chain is NAD(P)H-quinone oxidoreductase subunit I, chloroplastic, found in Agrostis stolonifera (Creeping bentgrass).